Consider the following 248-residue polypeptide: 2,3-bisphosphoglycerate-dependent phosphoglycerate mutase (248 aa).

Substrate-binding positions include arginine 8–asparagine 15, threonine 21–glycine 22, arginine 60, glutamate 87–tyrosine 90, lysine 98, arginine 114–arginine 115, and glycine 183–asparagine 184. The active-site Tele-phosphohistidine intermediate is the histidine 9. Glutamate 87 acts as the Proton donor/acceptor in catalysis.

Belongs to the phosphoglycerate mutase family. BPG-dependent PGAM subfamily. Homodimer.

It catalyses the reaction (2R)-2-phosphoglycerate = (2R)-3-phosphoglycerate. Its pathway is carbohydrate degradation; glycolysis; pyruvate from D-glyceraldehyde 3-phosphate: step 3/5. In terms of biological role, catalyzes the interconversion of 2-phosphoglycerate and 3-phosphoglycerate. In Burkholderia ambifaria (strain ATCC BAA-244 / DSM 16087 / CCUG 44356 / LMG 19182 / AMMD) (Burkholderia cepacia (strain AMMD)), this protein is 2,3-bisphosphoglycerate-dependent phosphoglycerate mutase.